The following is a 309-amino-acid chain: Ribosomal RNA small subunit methyltransferase H (309 aa).

S-adenosyl-L-methionine-binding positions include 33 to 35, aspartate 53, phenylalanine 79, aspartate 100, and glutamine 107; that span reads GGH.

This sequence belongs to the methyltransferase superfamily. RsmH family.

The protein resides in the cytoplasm. The catalysed reaction is cytidine(1402) in 16S rRNA + S-adenosyl-L-methionine = N(4)-methylcytidine(1402) in 16S rRNA + S-adenosyl-L-homocysteine + H(+). Functionally, specifically methylates the N4 position of cytidine in position 1402 (C1402) of 16S rRNA. This is Ribosomal RNA small subunit methyltransferase H from Clostridium botulinum (strain 657 / Type Ba4).